Reading from the N-terminus, the 853-residue chain is DNA mismatch repair protein MutS (853 aa).

616–623 is an ATP binding site; the sequence is GPNMGGKS.

Belongs to the DNA mismatch repair MutS family.

Functionally, this protein is involved in the repair of mismatches in DNA. It is possible that it carries out the mismatch recognition step. This protein has a weak ATPase activity. This chain is DNA mismatch repair protein MutS, found in Erwinia tasmaniensis (strain DSM 17950 / CFBP 7177 / CIP 109463 / NCPPB 4357 / Et1/99).